The chain runs to 105 residues: Large ribosomal subunit protein uL24 (105 aa).

This sequence belongs to the universal ribosomal protein uL24 family. Part of the 50S ribosomal subunit.

Functionally, one of two assembly initiator proteins, it binds directly to the 5'-end of the 23S rRNA, where it nucleates assembly of the 50S subunit. One of the proteins that surrounds the polypeptide exit tunnel on the outside of the subunit. The protein is Large ribosomal subunit protein uL24 of Thioalkalivibrio sulfidiphilus (strain HL-EbGR7).